The sequence spans 310 residues: Malate dehydrogenase (310 aa).

NAD(+)-binding positions include 7-13 and D34; that span reads GAAGGIG. Substrate-binding residues include R81 and R87. Residues N94 and 117-119 contribute to the NAD(+) site; that span reads ITN. N119 and R153 together coordinate substrate. Catalysis depends on H177, which acts as the Proton acceptor. Residue M227 coordinates NAD(+).

It belongs to the LDH/MDH superfamily. MDH type 1 family. As to quaternary structure, homodimer.

It carries out the reaction (S)-malate + NAD(+) = oxaloacetate + NADH + H(+). Its function is as follows. Catalyzes the reversible oxidation of malate to oxaloacetate. The protein is Malate dehydrogenase of Vibrio vulnificus (strain CMCP6).